The sequence spans 110 residues: Large ribosomal subunit protein uL22 (110 aa).

The span at 84-95 shows a compositional bias: basic residues; the sequence is ARGTASKIRKPT. Residues 84-110 are disordered; it reads ARGTASKIRKPTSHVMVEVSKPEKKEA.

The protein belongs to the universal ribosomal protein uL22 family. In terms of assembly, part of the 50S ribosomal subunit.

In terms of biological role, this protein binds specifically to 23S rRNA; its binding is stimulated by other ribosomal proteins, e.g. L4, L17, and L20. It is important during the early stages of 50S assembly. It makes multiple contacts with different domains of the 23S rRNA in the assembled 50S subunit and ribosome. The globular domain of the protein is located near the polypeptide exit tunnel on the outside of the subunit, while an extended beta-hairpin is found that lines the wall of the exit tunnel in the center of the 70S ribosome. The chain is Large ribosomal subunit protein uL22 from Campylobacter concisus (strain 13826).